We begin with the raw amino-acid sequence, 231 residues long: 7-cyano-7-deazaguanine synthase (231 aa).

8 to 18 (FSGGQDSTTCL) serves as a coordination point for ATP. Residues C188, C197, C200, and C203 each contribute to the Zn(2+) site.

Belongs to the QueC family. It depends on Zn(2+) as a cofactor.

It catalyses the reaction 7-carboxy-7-deazaguanine + NH4(+) + ATP = 7-cyano-7-deazaguanine + ADP + phosphate + H2O + H(+). It functions in the pathway purine metabolism; 7-cyano-7-deazaguanine biosynthesis. Functionally, catalyzes the ATP-dependent conversion of 7-carboxy-7-deazaguanine (CDG) to 7-cyano-7-deazaguanine (preQ(0)). This Escherichia coli (strain SE11) protein is 7-cyano-7-deazaguanine synthase.